The chain runs to 229 residues: Uracil-DNA glycosylase (229 aa).

Asp64 (proton acceptor) is an active-site residue.

It belongs to the uracil-DNA glycosylase (UDG) superfamily. UNG family.

The protein localises to the cytoplasm. It catalyses the reaction Hydrolyzes single-stranded DNA or mismatched double-stranded DNA and polynucleotides, releasing free uracil.. Excises uracil residues from the DNA which can arise as a result of misincorporation of dUMP residues by DNA polymerase or due to deamination of cytosine. In Klebsiella pneumoniae (strain 342), this protein is Uracil-DNA glycosylase.